A 459-amino-acid chain; its full sequence is ATP-dependent 6-phosphofructokinase (459 aa).

Residues Gly89, Arg154–Gly155, and Gly179–Gly182 contribute to the ATP site. Residue Asp180 participates in Mg(2+) binding. Residues Thr208–Asp210, Met253–Arg255, Glu309, and Tyr368–Arg371 each bind substrate. The active-site Proton acceptor is the Asp210.

It belongs to the phosphofructokinase type A (PFKA) family. PPi-dependent PFK group II subfamily. Atypical ATP-dependent clade 'X' sub-subfamily. Homodimer. It depends on Mg(2+) as a cofactor.

The protein resides in the cytoplasm. The enzyme catalyses beta-D-fructose 6-phosphate + ATP = beta-D-fructose 1,6-bisphosphate + ADP + H(+). It functions in the pathway carbohydrate degradation; glycolysis; D-glyceraldehyde 3-phosphate and glycerone phosphate from D-glucose: step 3/4. With respect to regulation, AMP causes 20-40% inhibition and diphosphate causes 20-50% inhibition. ADP, citrate, PEP and FBP have no effect. Its function is as follows. Catalyzes the phosphorylation of D-fructose 6-phosphate to fructose 1,6-bisphosphate by ATP, the first committing step of glycolysis. The sequence is that of ATP-dependent 6-phosphofructokinase from Amycolatopsis methanolica.